Consider the following 300-residue polypeptide: MNPHYARLVTLAAVSATAVALVLFVMKVFAWWHTGSVSLLASLVDSLVDIAASLVNLLVVRYSLQPADTEHAFGHGKAESLAALAQSMFISGSALFLILTGLQHSLEPQTLHAPEVGMWVTLIALVATLLLVSFQRWVVKHTHSQAVRADMLHYQSDLLMNGAILVALALSWKGITRADSLFALGIGVYILYSALRMGYDAVQSLLDRALPDEEHRAIAEVIVNWPGIRGAHALRTRRSGPTRFIQLHLEMDDALPLAEAHQIADDLEQALRKQFPGADIIIHQDPVSAVPENQRGRLTA.

4 consecutive transmembrane segments (helical) span residues 11-31 (LAAV…VFAW), 40-60 (LASL…LLVV), 81-101 (LAAL…ILTG), and 114-134 (PEVG…LVSF). 2 residues coordinate Zn(2+): Asp45 and Asp49. 2 residues coordinate Zn(2+): His153 and Asp157. A run of 2 helical transmembrane segments spans residues 156–176 (SDLL…KGIT) and 182–202 (FALG…YDAV).

It belongs to the cation diffusion facilitator (CDF) transporter (TC 2.A.4) family. FieF subfamily. Homodimer.

Its subcellular location is the cell inner membrane. The enzyme catalyses Zn(2+)(in) + H(+)(out) = Zn(2+)(out) + H(+)(in). It carries out the reaction Cd(2+)(in) + H(+)(out) = Cd(2+)(out) + H(+)(in). It catalyses the reaction Fe(2+)(in) + H(+)(out) = Fe(2+)(out) + H(+)(in). In terms of biological role, divalent metal cation transporter which exports Zn(2+), Cd(2+) and possibly Fe(2+). May be involved in zinc and iron detoxification by efflux. The sequence is that of Cation-efflux pump FieF from Pectobacterium atrosepticum (strain SCRI 1043 / ATCC BAA-672) (Erwinia carotovora subsp. atroseptica).